The primary structure comprises 197 residues: UPF0056 inner membrane protein YhgN (197 aa).

The Periplasmic segment spans residues 1 to 3 (MNE). A helical membrane pass occupies residues 4–24 (IISAAVLLILIMDPLGNLPIF). Topologically, residues 25–44 (MSVLKHTEPKRRRAIMVREL) are cytoplasmic. Residues 45–65 (LIALLVMLVFLFAGEKILAFL) traverse the membrane as a helical segment. Over 66 to 71 (SLRAET) the chain is Periplasmic. Residues 72–92 (VSISGGIILFLIAIKMIFPSA) traverse the membrane as a helical segment. The Cytoplasmic segment spans residues 93 to 105 (SGNSSGLPAGEEP). Residues 106 to 126 (FIVPLAIPLVAGPTILATLML) form a helical membrane-spanning segment. The Periplasmic portion of the chain corresponds to 127 to 138 (LSHQYPNQMGHL). A helical transmembrane segment spans residues 139–159 (VIALLLAWGGTFVILLQSSLF). At 160–173 (LRLLGEKGVNALER) the chain is on the cytoplasmic side. A helical membrane pass occupies residues 174 to 194 (LMGLILVMMATQMFLDGIRMW). At 195–197 (MKG) the chain is on the periplasmic side.

The protein belongs to the UPF0056 (MarC) family.

Its subcellular location is the cell inner membrane. This chain is UPF0056 inner membrane protein YhgN (yhgN), found in Escherichia coli O157:H7.